The primary structure comprises 1212 residues: DNA-directed RNA polymerase subunit beta' (1212 aa).

Residues Cys-60, Cys-62, Cys-75, and Cys-78 each contribute to the Zn(2+) site. Mg(2+) is bound by residues Asp-450, Asp-452, and Asp-454. Positions 819, 893, 900, and 903 each coordinate Zn(2+).

Belongs to the RNA polymerase beta' chain family. As to quaternary structure, the RNAP catalytic core consists of 2 alpha, 1 beta, 1 beta' and 1 omega subunit. When a sigma factor is associated with the core the holoenzyme is formed, which can initiate transcription. The cofactor is Mg(2+). Zn(2+) serves as cofactor.

It carries out the reaction RNA(n) + a ribonucleoside 5'-triphosphate = RNA(n+1) + diphosphate. In terms of biological role, DNA-dependent RNA polymerase catalyzes the transcription of DNA into RNA using the four ribonucleoside triphosphates as substrates. The polypeptide is DNA-directed RNA polymerase subunit beta' (Streptococcus thermophilus (strain CNRZ 1066)).